The primary structure comprises 697 residues: Long-chain-fatty-acid--CoA ligase 6 (697 aa).

Residues 25–45 (LSATTLVSMGALAAILAYWFT) traverse the membrane as a helical; Signal-anchor for type III membrane protein segment. The Cytoplasmic portion of the chain corresponds to 46 to 697 (HRPKALQPPC…QIEELYSISM (652 aa)).

This sequence belongs to the ATP-dependent AMP-binding enzyme family. Mg(2+) serves as cofactor. As to expression, expressed predominantly in erythrocyte precursors, in particular in reticulocytes, fetal blood cells derived from fetal liver, hemopoietic stem cells from cord blood, bone marrow and brain.

Its subcellular location is the mitochondrion outer membrane. It is found in the peroxisome membrane. The protein resides in the microsome membrane. It localises to the endoplasmic reticulum membrane. The enzyme catalyses a long-chain fatty acid + ATP + CoA = a long-chain fatty acyl-CoA + AMP + diphosphate. It catalyses the reaction (5Z,8Z,11Z,14Z)-eicosatetraenoate + ATP + CoA = (5Z,8Z,11Z,14Z)-eicosatetraenoyl-CoA + AMP + diphosphate. It carries out the reaction hexadecanoate + ATP + CoA = hexadecanoyl-CoA + AMP + diphosphate. The catalysed reaction is (E)-hexadec-2-enoate + ATP + CoA = (2E)-hexadecenoyl-CoA + AMP + diphosphate. The enzyme catalyses 15-hydroxy-(5Z,8Z,11Z,13E)-eicosatetraenoate + ATP + CoA = 15-hydroxy-(5Z,8Z,11Z,13E)-eicosatetraenoyl-CoA + AMP + diphosphate. It catalyses the reaction 12-hydroxy-(5Z,8Z,10E,14Z)-eicosatetraenoate + ATP + CoA = 12-hydroxy-(5Z,8Z,10E,14Z)-eicosatetraenoyl-CoA + AMP + diphosphate. It carries out the reaction 5-hydroxy-(6E,8Z,11Z,14Z)-eicosatetraenoate + ATP + CoA = 5-hydroxy-(6E,8Z,11Z,14Z)-eicosatetraenoyl-CoA + AMP + diphosphate. Functionally, catalyzes the conversion of long-chain fatty acids to their active form acyl-CoA for both synthesis of cellular lipids, and degradation via beta-oxidation. Plays an important role in fatty acid metabolism in brain and the acyl-CoAs produced may be utilized exclusively for the synthesis of the brain lipid. The sequence is that of Long-chain-fatty-acid--CoA ligase 6 from Homo sapiens (Human).